A 624-amino-acid polypeptide reads, in one-letter code: Chaperone protein HtpG (624 aa).

An a; substrate-binding region spans residues 1–336 (MNMKGQETRG…SNDLPLNVSR (336 aa)). The interval 337-552 (EILQDSRITQ…ADEMSTQMAK (216 aa)) is b. The c stretch occupies residues 553–624 (LFAAAGQQAP…IRRMNQLLTA (72 aa)).

This sequence belongs to the heat shock protein 90 family. As to quaternary structure, homodimer.

It localises to the cytoplasm. Its function is as follows. Molecular chaperone. Has ATPase activity. This chain is Chaperone protein HtpG, found in Yersinia pestis bv. Antiqua (strain Antiqua).